The primary structure comprises 473 residues: Ribulose bisphosphate carboxylase large chain (473 aa).

Substrate is bound by residues Asn-116 and Thr-166. Lys-168 serves as the catalytic Proton acceptor. Lys-170 is a binding site for substrate. Mg(2+) is bound by residues Lys-194, Asp-196, and Glu-197. The residue at position 194 (Lys-194) is an N6-carboxylysine. His-287 acts as the Proton acceptor in catalysis. 3 residues coordinate substrate: Arg-288, His-320, and Ser-372.

Belongs to the RuBisCO large chain family. Type I subfamily. Heterohexadecamer of 8 large chains and 8 small chains. Mg(2+) serves as cofactor.

The enzyme catalyses 2 (2R)-3-phosphoglycerate + 2 H(+) = D-ribulose 1,5-bisphosphate + CO2 + H2O. It carries out the reaction D-ribulose 1,5-bisphosphate + O2 = 2-phosphoglycolate + (2R)-3-phosphoglycerate + 2 H(+). In terms of biological role, ruBisCO catalyzes two reactions: the carboxylation of D-ribulose 1,5-bisphosphate, the primary event in carbon dioxide fixation, as well as the oxidative fragmentation of the pentose substrate. Both reactions occur simultaneously and in competition at the same active site. This is Ribulose bisphosphate carboxylase large chain from Nitrosomonas sp. (strain ENI-11).